A 330-amino-acid chain; its full sequence is tRNA uridine(34) hydroxylase (330 aa).

In terms of domain architecture, Rhodanese spans 123-217 (SDPETILVDT…YLEEVPKEES (95 aa)). Cys-177 acts as the Cysteine persulfide intermediate in catalysis. Positions 310 to 330 (LNKQQKQQAKEIARKKAKSEI) are disordered. Residues 317 to 330 (QAKEIARKKAKSEI) show a composition bias toward basic and acidic residues.

The protein belongs to the TrhO family.

The enzyme catalyses uridine(34) in tRNA + AH2 + O2 = 5-hydroxyuridine(34) in tRNA + A + H2O. Catalyzes oxygen-dependent 5-hydroxyuridine (ho5U) modification at position 34 in tRNAs. This is tRNA uridine(34) hydroxylase from Francisella philomiragia subsp. philomiragia (strain ATCC 25017 / CCUG 19701 / FSC 153 / O#319-036).